The following is a 700-amino-acid chain: Inhibitor of carbonic anhydrase (700 aa).

The N-terminal stretch at 1 to 19 (MRLLICALLCLGTLGLCLA) is a signal peptide. Transferrin-like domains follow at residues 25-347 (IRWC…NLKR) and 355-685 (VKWC…NFRQ). 16 disulfide bridges follow: Cys28/Cys67, Cys38/Cys58, Cys137/Cys213, Cys172/Cys188, Cys175/Cys198, Cys185/Cys196, Cys246/Cys260, Cys358/Cys390, Cys368/Cys381, Cys415/Cys695, Cys438/Cys658, Cys470/Cys545, Cys494/Cys686, Cys504/Cys518, Cys515/Cys528, and Cys585/Cys599. An N-linked (GlcNAc...) asparagine glycan is attached at Asn664.

This sequence belongs to the transferrin family. As to quaternary structure, monomer. Interacts (via transferrin-like domain 2) with CA2. In terms of processing, N-glycosylated. As to expression, detected in blood plasma, heart, kidney, liver, colon, lung, spleen, pancreas and testis (at protein level).

The protein resides in the secreted. Inhibitor for carbonic anhydrase 2 (CA2). Does not bind iron ions. This chain is Inhibitor of carbonic anhydrase, found in Mus musculus (Mouse).